A 311-amino-acid chain; its full sequence is 4-diphosphocytidyl-2-C-methyl-D-erythritol kinase (311 aa).

Residue Lys-11 is part of the active site. 94–104 contributes to the ATP binding site; that stretch reads PVAAGLAGGSA. The active site involves Asp-136.

It belongs to the GHMP kinase family. IspE subfamily.

It carries out the reaction 4-CDP-2-C-methyl-D-erythritol + ATP = 4-CDP-2-C-methyl-D-erythritol 2-phosphate + ADP + H(+). Its pathway is isoprenoid biosynthesis; isopentenyl diphosphate biosynthesis via DXP pathway; isopentenyl diphosphate from 1-deoxy-D-xylulose 5-phosphate: step 3/6. Functionally, catalyzes the phosphorylation of the position 2 hydroxy group of 4-diphosphocytidyl-2C-methyl-D-erythritol. This is 4-diphosphocytidyl-2-C-methyl-D-erythritol kinase from Synechococcus sp. (strain JA-2-3B'a(2-13)) (Cyanobacteria bacterium Yellowstone B-Prime).